We begin with the raw amino-acid sequence, 657 residues long: uncharacterized protein (657 aa).

Positions 1 to 17 (MACVLACVAVLIGAASA) are cleaved as a signal peptide.

This is an uncharacterized protein from Orgyia pseudotsugata (Douglas-fir tussock moth).